We begin with the raw amino-acid sequence, 353 residues long: CCN family member 3 (353 aa).

The N-terminal stretch at 1–26 (MEPGGGHSLPVLLLLLLLLLLRPSEV) is a signal peptide. In terms of domain architecture, IGFBP N-terminal spans 29–103 (REAPCPRPCG…GGGTGICMVL (75 aa)). Disulfide bonds link Cys33/Cys59, Cys37/Cys61, Cys41/Cys62, Cys48/Cys65, Cys73/Cys87, and Cys79/Cys100. Residues 106–172 (DNCVFDGMIY…GECCEKWVCE (67 aa)) form the VWFC domain. The TSP type-1 domain occupies 203–248 (NCIEQTTEWSACSRSCGMGFSTRVTNRNQQCEMVKQTRLCMMRPCE). 5 cysteine pairs are disulfide-bonded: Cys260-Cys297, Cys277-Cys311, Cys288-Cys327, Cys291-Cys329, and Cys296-Cys333. The region spanning 260 to 334 (CIRTKKSMKA…NTCVCHGNCP (75 aa)) is the CTCK domain. The N-linked (GlcNAc...) asparagine glycan is linked to Asn276.

Belongs to the CCN family.

It is found in the secreted. It localises to the cytoplasm. The protein localises to the cell junction. Its subcellular location is the gap junction. Functionally, immediate-early protein likely to play a role in cell growth regulation. The protein is CCN family member 3 (CCN3) of Coturnix japonica (Japanese quail).